Consider the following 66-residue polypeptide: UPF0337 protein SAG0606 (66 aa).

A compositionally biased stretch (basic and acidic residues) spans 1–10; sequence MSQEKLKSKV. The tract at residues 1 to 23 is disordered; sequence MSQEKLKSKVEQASGSLKEGAGK.

The protein belongs to the UPF0337 (CsbD) family.

This is UPF0337 protein SAG0606 from Streptococcus agalactiae serotype V (strain ATCC BAA-611 / 2603 V/R).